The chain runs to 153 residues: Large ribosomal subunit protein uL15 (153 aa).

Residues 21 to 41 form a disordered region; it reads RGIGSGKGKTGGRGIKGQKSR. Positions 23–35 are enriched in gly residues; sequence IGSGKGKTGGRGI.

This sequence belongs to the universal ribosomal protein uL15 family. In terms of assembly, part of the 50S ribosomal subunit.

In terms of biological role, binds to the 23S rRNA. The polypeptide is Large ribosomal subunit protein uL15 (Rickettsia rickettsii (strain Iowa)).